A 372-amino-acid chain; its full sequence is Cytochrome b (372 aa).

Transmembrane regions (helical) follow at residues 25–45 (FGSM…FLAI), 69–90 (WTMQ…YIHI), 105–125 (WLSG…GYVL), and 170–190 (FFAL…IHII). Heme b is bound by residues His-75 and His-89. Heme b-binding residues include His-174 and His-188. His-193 provides a ligand contact to a ubiquinone. 4 helical membrane passes run 218 to 238 (YKDI…MAFA), 280 to 300 (LGGT…PFTH), 312 to 332 (LAQM…WTAT), and 339 to 358 (FILI…IINP).

It belongs to the cytochrome b family. In terms of assembly, the cytochrome bc1 complex contains 3 respiratory subunits (MT-CYB, CYC1 and UQCRFS1), 2 core proteins (UQCRC1 and UQCRC2) and probably 6 low-molecular weight proteins. Heme b is required as a cofactor.

Its subcellular location is the mitochondrion inner membrane. In terms of biological role, component of the ubiquinol-cytochrome c reductase complex (complex III or cytochrome b-c1 complex) that is part of the mitochondrial respiratory chain. The b-c1 complex mediates electron transfer from ubiquinol to cytochrome c. Contributes to the generation of a proton gradient across the mitochondrial membrane that is then used for ATP synthesis. The sequence is that of Cytochrome b (MT-CYB) from Acanthophis antarcticus (Common death adder).